The chain runs to 400 residues: Probable peptidoglycan glycosyltransferase FtsW (400 aa).

The Cytoplasmic segment spans residues 1-24 (MSTGSLPLGLPSRDSLDGLRNSVD). A helical membrane pass occupies residues 25-45 (LPLLAAAALLLGLGLIMVASA). The Periplasmic portion of the chain corresponds to 46 to 63 (SMDLGERYYGNTWHFFQR). A helical membrane pass occupies residues 64–84 (QVLFAAIGLALATVMWAIPLE). The Cytoplasmic portion of the chain corresponds to 85 to 88 (RWER). Residues 89–109 (AGPWLLILVMVLLIAVLLPGV) traverse the membrane as a helical segment. The Periplasmic portion of the chain corresponds to 110-118 (GRTVNGATR). Residues 119-139 (WIPIGMFNLQVAEPVKLLVVM) traverse the membrane as a helical segment. Over 140–153 (YLAGYIVRHYSALR) the chain is Cytoplasmic. A helical transmembrane segment spans residues 154 to 174 (LHLRGFVRPLVVLGFGTVLLL). Residues 175 to 177 (LQP) lie on the Periplasmic side of the membrane. A helical membrane pass occupies residues 178 to 198 (DFGGAAIMLAIGMGMLFLAGA). Residue lysine 199 is a topological domain, cytoplasmic. A helical membrane pass occupies residues 200–220 (LWQFAALGATIAVGMAFVAVA). Topologically, residues 221-278 (APYRVARLTAFLDPWQDPFATGFQLTQSLIAIGSGGWFGTGLGNSVQKLFYLPEAHND) are periplasmic. A helical membrane pass occupies residues 279-299 (FLFAVFAEEFGFIGVLALIAL). Residues 300–324 (FAVVVWRCVKIGLWAERAGHAFGSH) are Cytoplasmic-facing. A helical membrane pass occupies residues 325 to 345 (LAFGVAIWLALQSALNLAVNM). Residues 346–354 (GLLPTKGMT) lie on the Periplasmic side of the membrane. Residues 355 to 375 (LPFLSYGGSSLIVTLMAIGLV) form a helical membrane-spanning segment. At 376–400 (MRVYREAQIPAPRQSTPPRRKRGQA) the chain is on the cytoplasmic side.

Belongs to the SEDS family. FtsW subfamily.

Its subcellular location is the cell inner membrane. It carries out the reaction [GlcNAc-(1-&gt;4)-Mur2Ac(oyl-L-Ala-gamma-D-Glu-L-Lys-D-Ala-D-Ala)](n)-di-trans,octa-cis-undecaprenyl diphosphate + beta-D-GlcNAc-(1-&gt;4)-Mur2Ac(oyl-L-Ala-gamma-D-Glu-L-Lys-D-Ala-D-Ala)-di-trans,octa-cis-undecaprenyl diphosphate = [GlcNAc-(1-&gt;4)-Mur2Ac(oyl-L-Ala-gamma-D-Glu-L-Lys-D-Ala-D-Ala)](n+1)-di-trans,octa-cis-undecaprenyl diphosphate + di-trans,octa-cis-undecaprenyl diphosphate + H(+). The protein operates within cell wall biogenesis; peptidoglycan biosynthesis. In terms of biological role, peptidoglycan polymerase that is essential for cell division. This Thioalkalivibrio sp. (strain K90mix) protein is Probable peptidoglycan glycosyltransferase FtsW.